The sequence spans 767 residues: 5-methyltetrahydropteroyltriglutamate--homocysteine methyltransferase (767 aa).

5-methyltetrahydropteroyltri-L-glutamate-binding positions include 16–19 (RELK) and Lys122. L-homocysteine-binding positions include 443-445 (IGS) and Glu496. Residues 443–445 (IGS) and Glu496 contribute to the L-methionine site. Residues 527–528 (RC) and Trp573 contribute to the 5-methyltetrahydropteroyltri-L-glutamate site. Asp611 contacts L-homocysteine. Asp611 is a binding site for L-methionine. Glu617 lines the 5-methyltetrahydropteroyltri-L-glutamate pocket. Zn(2+) is bound by residues His653, Cys655, and Glu677. The active-site Proton donor is His706. Zn(2+) is bound at residue Cys738.

The protein belongs to the vitamin-B12 independent methionine synthase family. It depends on Zn(2+) as a cofactor.

It catalyses the reaction 5-methyltetrahydropteroyltri-L-glutamate + L-homocysteine = tetrahydropteroyltri-L-glutamate + L-methionine. It participates in amino-acid biosynthesis; L-methionine biosynthesis via de novo pathway; L-methionine from L-homocysteine (MetE route): step 1/1. In terms of biological role, catalyzes the transfer of a methyl group from 5-methyltetrahydrofolate to homocysteine resulting in methionine formation. The polypeptide is 5-methyltetrahydropteroyltriglutamate--homocysteine methyltransferase (Ectopseudomonas mendocina (strain ymp) (Pseudomonas mendocina)).